We begin with the raw amino-acid sequence, 996 residues long: Phototropin-1 (996 aa).

Residues 1-184 (MEPTEKPSTK…PGGRSGIPRV (184 aa)) form a disordered region. Serine 23 and serine 58 each carry phosphoserine. The span at 49 to 59 (QNLSDPRGTSP) shows a compositional bias: polar residues. The segment covering 60-70 (QPRPQQEPAPS) has biased composition (pro residues). Residues 141–153 (SGGTENDPNGKKT) show a composition bias toward polar residues. Over residues 155-166 (SQRNSQNSCRSS) the composition is skewed to low complexity. The region spanning 184 to 257 (VSEDLKDALS…AKIRETLAAG (74 aa)) is the PAS 1 domain. Serine 185 is modified (phosphoserine). Residue asparagine 233 coordinates FMN. An S-4a-FMN cysteine modification is found at cysteine 234. Residues arginine 235, glutamine 238, arginine 251, asparagine 266, asparagine 276, glutamine 297, and lysine 302 each coordinate FMN. In terms of domain architecture, PAC 1 spans 258-312 (NNYCGRILNYKKDGTSFWNLLTIAPIKDESGKVLKFIGMQVEVSKHTEGAKEKAL). Phosphoserine is present on residues serine 350, serine 376, and serine 410. 2 disordered regions span residues 351–413 (ESTN…SLSF) and 434–453 (YGEE…SVDD). Positions 434-443 (YGEEDDEISD) are enriched in acidic residues. The span at 444-453 (RDERPESVDD) shows a compositional bias: basic and acidic residues. Position 450 is a phosphoserine (serine 450). The PAS 2 domain occupies 462-535 (KGIDLATTLE…KKIRNAIDNQ (74 aa)). An FMN-binding site is contributed by asparagine 511. S-4a-FMN cysteine is present on cysteine 512. The FMN site is built by arginine 513, glutamine 516, arginine 529, asparagine 544, asparagine 554, phenylalanine 556, and glutamine 575. The PAC 2 domain maps to 536-590 (TEVTVQLINYTKSGKKFWNIFHLQPMRDQKGEVQYFIGVQLDGSKHVEPVRNVIE). Residues 663-952 (FKPVKPLGSG…ANEVKQHSFF (290 aa)) enclose the Protein kinase domain. Residues 669–677 (LGSGDTGSV) and lysine 692 each bind ATP. Catalysis depends on aspartate 788, which acts as the Proton acceptor. The segment at 806 to 862 (DFDLSCLTSCKPQLLIPSIDEKKKKKQQKSQQTPIFMAEPMRASNSFVGTEEYIAPE) is activation loop.

Belongs to the protein kinase superfamily. AGC Ser/Thr protein kinase family. As to quaternary structure, homodimer; disulfide-linked. Interacts with PKS1, PKS2, RPT2, RPT3, PHOT2 and BLUS1. Subunit of a complex made of CAR6, PHOT1 and RPT3/NPH3. Associates with CBC1 and CBC2. Binds to BHP. FMN is required as a cofactor. In terms of processing, autophosphorylated at Ser-185, Ser-350 and Ser-410 in response to blue light irradiation. Post-translationally, 2 molecules of FMN bind covalently to cysteines after exposure to blue light and are reversed in the dark. In terms of tissue distribution, present in guard cells (at protein level).

The protein localises to the cell membrane. It localises to the cytoplasm. It catalyses the reaction L-seryl-[protein] + ATP = O-phospho-L-seryl-[protein] + ADP + H(+). The catalysed reaction is L-threonyl-[protein] + ATP = O-phospho-L-threonyl-[protein] + ADP + H(+). Autophosphorylation is inhibited by staurosporine, but not by tyrphostin 9, sphingosine, GW5074 and BML-265. In terms of biological role, protein kinase that acts as a blue light (BL) photoreceptor in a signal-transduction pathway for photo-induced movements. Triggers the phosphorylation of AHA1 and AHA2 C-terminal penultimate Thr in guard cells to activate them and induce stomatal opening in response to blue light (BL). Also phosphorylates BLUS1, a kinase involved in stomatal opening. Mediates the phosphorylation of CBC1 in stomata, but not of CBC2, in response to blue light. Required for blue light mediated mRNA destabilization. Mediates calcium spiking of extracellular origin in response to a low rate of blue light. Also mediates rapid membrane depolarization and growth inhibition in response to blue light. Necessary for root phototropism. Involved in hypocotyl phototropism under a low rate but not under a high rate of blue light. Contributes to the chloroplast accumulation but seems not to be required for chloroplast translocation. Regulates stomata opening and photomorphogenesis response of leaf tissue. Confers sensitivity to drought. Not involved in hypocotyl elongation inhibition, anthocyanin accumulation or cotyledon opening. Involved in the regulation of leaf position and morphology via the phosphorylation of ABCB19 during blue light responses to modulate auxin distribution. In Arabidopsis thaliana (Mouse-ear cress), this protein is Phototropin-1.